Here is a 259-residue protein sequence, read N- to C-terminus: Probable WRKY transcription factor 65 (259 aa).

Positions 1-17 (MKRGLDMARSYNDHESS) are enriched in basic and acidic residues. Disordered stretches follow at residues 1–101 (MKRG…RCSS) and 126–165 (TSEHNHPWPLTSSTRNGPKPKPEPKPEPEPEVEPEAEEED). Residues 18-31 (QETGPESPNSSTFN) are compositionally biased toward polar residues. Basic and acidic residues predominate over residues 47-69 (RSVEKRVVNVPMKEMEGSRHKGD). A DNA-binding region (WRKY) is located at residues 68–134 (GDTTPPSDSW…YTSEHNHPWP (67 aa)). The segment covering 154-165 (EPEVEPEAEEED) has biased composition (acidic residues).

Its subcellular location is the nucleus. In terms of biological role, transcription factor. Interacts specifically with the W box (5'-(T)TGAC[CT]-3'), a frequently occurring elicitor-responsive cis-acting element. This chain is Probable WRKY transcription factor 65 (WRKY65), found in Arabidopsis thaliana (Mouse-ear cress).